We begin with the raw amino-acid sequence, 689 residues long: Pentatricopeptide repeat-containing protein At2g03380, mitochondrial (689 aa).

The transit peptide at 1-12 directs the protein to the mitochondrion; the sequence is MLRSITLSPTRR. PPR repeat units lie at residues 75 to 105, 106 to 140, 141 to 171, 175 to 205, 206 to 240, 241 to 275, 276 to 306, 307 to 341, 342 to 372, 376 to 406, 407 to 441, 442 to 476, 479 to 509, 510 to 544, 545 to 580, and 581 to 611; these read DISI…IPEP, DFYL…GFRY, DDIV…LVKV, DNVV…ITLR, NVVC…NVLG, NEYT…GIEL, SSCL…HSHV, DLVM…EIKP, NCVT…SIKV, DTNV…ESEK, DIVA…SVTP, NGVT…GFLA, SVHV…IEEK, NTIT…QQKP, NEST…NFTP, and STKH…MPIQ. Residues 616–689 are type E motif; degenerate; it reads CFGAFLHGCG…SKIAGHSTME (74 aa).

This sequence belongs to the PPR family. PCMP-E subfamily.

The protein localises to the mitochondrion. The sequence is that of Pentatricopeptide repeat-containing protein At2g03380, mitochondrial (PCMP-E47) from Arabidopsis thaliana (Mouse-ear cress).